The following is a 58-amino-acid chain: Enterocin-HF (58 aa).

The propeptide occupies 1-15; that stretch reads MEKLTVKEMSQVVGG. Residues cysteine 24 and cysteine 29 are joined by a disulfide bond.

It is found in the secreted. Its function is as follows. Bacteriocin. This chain is Enterocin-HF (entHF), found in Enterococcus faecium (Streptococcus faecium).